Here is a 314-residue protein sequence, read N- to C-terminus: Ornithine carbamoyltransferase (314 aa).

Residues 58–61 (STRT), glutamine 85, arginine 109, and 136–139 (HPLQ) contribute to the carbamoyl phosphate site. L-ornithine-binding positions include asparagine 168, aspartate 232, and 236-237 (SM). Residues 272 to 273 (CL) and arginine 300 contribute to the carbamoyl phosphate site.

Belongs to the aspartate/ornithine carbamoyltransferase superfamily. OTCase family.

The protein localises to the cytoplasm. It carries out the reaction carbamoyl phosphate + L-ornithine = L-citrulline + phosphate + H(+). Its pathway is amino-acid biosynthesis; L-arginine biosynthesis; L-arginine from L-ornithine and carbamoyl phosphate: step 1/3. In terms of biological role, reversibly catalyzes the transfer of the carbamoyl group from carbamoyl phosphate (CP) to the N(epsilon) atom of ornithine (ORN) to produce L-citrulline. This chain is Ornithine carbamoyltransferase, found in Hyperthermus butylicus (strain DSM 5456 / JCM 9403 / PLM1-5).